The following is a 168-amino-acid chain: G/U mismatch-specific DNA glycosylase (168 aa).

It belongs to the uracil-DNA glycosylase (UDG) superfamily. TDG/mug family. In terms of assembly, binds DNA as a monomer.

The protein resides in the cytoplasm. The enzyme catalyses Specifically hydrolyzes mismatched double-stranded DNA and polynucleotides, releasing free uracil.. Functionally, excises ethenocytosine and uracil, which can arise by alkylation or deamination of cytosine, respectively, from the corresponding mispairs with guanine in ds-DNA. It is capable of hydrolyzing the carbon-nitrogen bond between the sugar-phosphate backbone of the DNA and the mispaired base. The complementary strand guanine functions in substrate recognition. Required for DNA damage lesion repair in stationary-phase cells. The sequence is that of G/U mismatch-specific DNA glycosylase from Escherichia coli O139:H28 (strain E24377A / ETEC).